Here is a 398-residue protein sequence, read N- to C-terminus: Dihydrolipoyllysine-residue acetyltransferase component of acetoin cleaving system (398 aa).

The 76-residue stretch at 2-77 (AVKVVMPKLG…PPGTAICYIG (76 aa)) folds into the Lipoyl-binding domain. Residue lysine 43 is modified to N6-lipoyllysine. Positions 118–155 (KISPVARKIAEKAGLDLKQLKGTGPGGRIVKDDVTKAL) constitute a Peripheral subunit-binding (PSBD) domain. Residues histidine 371 and aspartate 375 contribute to the active site.

Belongs to the 2-oxoacid dehydrogenase family. It depends on (R)-lipoate as a cofactor.

It carries out the reaction N(6)-[(R)-dihydrolipoyl]-L-lysyl-[protein] + acetyl-CoA = N(6)-[(R)-S(8)-acetyldihydrolipoyl]-L-lysyl-[protein] + CoA. It functions in the pathway ketone degradation; acetoin degradation. The chain is Dihydrolipoyllysine-residue acetyltransferase component of acetoin cleaving system (acoC) from Bacillus subtilis (strain 168).